Here is a 225-residue protein sequence, read N- to C-terminus: UPF0173 metal-dependent hydrolase Pcal_1074 (225 aa).

This sequence belongs to the UPF0173 family.

The polypeptide is UPF0173 metal-dependent hydrolase Pcal_1074 (Pyrobaculum calidifontis (strain DSM 21063 / JCM 11548 / VA1)).